Here is a 513-residue protein sequence, read N- to C-terminus: Putative ATP-dependent RNA helicase QP509L (513 aa).

The 153-residue stretch at 110–262 (KKLLSPYGRF…KIIIHHLGQP (153 aa)) folds into the Helicase ATP-binding domain. 123 to 130 (LNTGLGKT) contributes to the ATP binding site. Positions 215–218 (DEAH) match the DEAH box motif.

Belongs to the DEAD box helicase family. DEAH subfamily.

It carries out the reaction ATP + H2O = ADP + phosphate + H(+). In Ornithodoros (relapsing fever ticks), this protein is Putative ATP-dependent RNA helicase QP509L.